The primary structure comprises 253 residues: rRNA adenine N-6-methyltransferase (253 aa).

The S-adenosyl-L-methionine site is built by Asn14, Leu16, Gly40, Glu61, Asp85, and Asn101. A disordered region spans residues 229–253 (CAREESTPRPYLPDCTPTTGSISSR). Polar residues predominate over residues 244–253 (TPTTGSISSR).

The protein belongs to the class I-like SAM-binding methyltransferase superfamily. rRNA adenine N(6)-methyltransferase family.

Involved in erythromycin resistance. The sequence is that of rRNA adenine N-6-methyltransferase (ermA) from Corynebacterium diphtheriae.